The following is a 431-amino-acid chain: Protoheme IX farnesyltransferase, mitochondrial (431 aa).

Residues 1 to 33 (MWRRSVVYRFSSRISVSSSLPNPRLIPWSRELC) constitute a mitochondrion transit peptide. 9 consecutive transmembrane segments (helical) span residues 109-129 (LVVATSGTGYILGTGNAAISF), 131-153 (GLCYTCAGTMMIAASANSLNQIF), 174-194 (ISVPHAVAWATIAGASGACLL), 200-220 (MLAAGLASANLVLYAFVYTPL), 226-246 (INTWVGAVVGAIPPLLGWAAA), 255-275 (MILPAALYFWQIPHFMALAHL), 298-317 (IAAVALRNCFYMIPLGFIAY), 322-344 (TSSWFCLESTLLTLAIAATAFSF), and 356-376 (MFHASLLFLPVFMSGLLLHRV).

Belongs to the ubiA prenyltransferase (TC 3.D.4.8) family.

The protein resides in the mitochondrion inner membrane. The enzyme catalyses heme b + (2E,6E)-farnesyl diphosphate + H2O = Fe(II)-heme o + diphosphate. In terms of biological role, converts protoheme IX and farnesyl diphosphate to heme O. This chain is Protoheme IX farnesyltransferase, mitochondrial (COX10), found in Arabidopsis thaliana (Mouse-ear cress).